Consider the following 619-residue polypeptide: MPKLRSATSTEGRNMAGARALWRATGVKENDFGKPIIAIANSFTQFVPGHVHLKNMGSLVAGAIEEAGGIAKEFNTIAVDDGIAMGHGGMLYSLPSRELIADSVEYMVNAHCADALVCISNCDKITPGMLMAALRLNIPVVFVSGGPMEAGKTKLSDQIIKLDLVDAMIAGADSNVSDEDSKQIERSACPTCGSCSGMFTANSMNCLTEALGLSLPGNGSMLATHEDRRELFLEAGRRVMMLAERYYKHDDETALPRNIASFKSFENAMVLDVAMGGSSNTVLHLVAAAQEAEIDFTMADIDRISRLVPHLCKVAPSTPKYHMEDVHRAGGVMGILGELDRAGLIHNDVPHVAADNGGDLKSVLAKYDIKQTNDPDVIRFFSAGPAGIPTTKAFSQNCRWDSVDDDRENGCIRSREFAFSQEGGLAVLSGNVAVDGCIVKTAGVDESNLTFVGSARVYESQDDAVAGILGGEVVEGDVVVIRYEGPKGGPGMQEMLYPTTYLKSRGLGAKCALITDGRFSGGTSGLSIGHVSPEAASGGTIALIENGDQIAIDIPKRSIQLNVSEAELTQRRTAMDAKGPLGWKPVSRERYVSLALKAYALLATSADKGAVRDRTKLEG.

Residue aspartate 81 coordinates Mg(2+). Residue cysteine 122 participates in [2Fe-2S] cluster binding. Residues aspartate 123 and lysine 124 each contribute to the Mg(2+) site. The residue at position 124 (lysine 124) is an N6-carboxylysine. Residue cysteine 195 participates in [2Fe-2S] cluster binding. Glutamate 494 contacts Mg(2+). Serine 520 acts as the Proton acceptor in catalysis.

It belongs to the IlvD/Edd family. In terms of assembly, homodimer. It depends on [2Fe-2S] cluster as a cofactor. The cofactor is Mg(2+).

It carries out the reaction (2R)-2,3-dihydroxy-3-methylbutanoate = 3-methyl-2-oxobutanoate + H2O. It catalyses the reaction (2R,3R)-2,3-dihydroxy-3-methylpentanoate = (S)-3-methyl-2-oxopentanoate + H2O. It functions in the pathway amino-acid biosynthesis; L-isoleucine biosynthesis; L-isoleucine from 2-oxobutanoate: step 3/4. It participates in amino-acid biosynthesis; L-valine biosynthesis; L-valine from pyruvate: step 3/4. Its function is as follows. Functions in the biosynthesis of branched-chain amino acids. Catalyzes the dehydration of (2R,3R)-2,3-dihydroxy-3-methylpentanoate (2,3-dihydroxy-3-methylvalerate) into 2-oxo-3-methylpentanoate (2-oxo-3-methylvalerate) and of (2R)-2,3-dihydroxy-3-methylbutanoate (2,3-dihydroxyisovalerate) into 2-oxo-3-methylbutanoate (2-oxoisovalerate), the penultimate precursor to L-isoleucine and L-valine, respectively. The chain is Dihydroxy-acid dehydratase from Shewanella frigidimarina (strain NCIMB 400).